A 195-amino-acid polypeptide reads, in one-letter code: Protein GrpE (195 aa).

This sequence belongs to the GrpE family. Homodimer.

The protein localises to the cytoplasm. In terms of biological role, participates actively in the response to hyperosmotic and heat shock by preventing the aggregation of stress-denatured proteins, in association with DnaK and GrpE. It is the nucleotide exchange factor for DnaK and may function as a thermosensor. Unfolded proteins bind initially to DnaJ; upon interaction with the DnaJ-bound protein, DnaK hydrolyzes its bound ATP, resulting in the formation of a stable complex. GrpE releases ADP from DnaK; ATP binding to DnaK triggers the release of the substrate protein, thus completing the reaction cycle. Several rounds of ATP-dependent interactions between DnaJ, DnaK and GrpE are required for fully efficient folding. The chain is Protein GrpE from Francisella tularensis subsp. mediasiatica (strain FSC147).